Here is a 302-residue protein sequence, read N- to C-terminus: 3-methyl-2-oxobutanoate hydroxymethyltransferase 1 (302 aa).

Positions 75 and 118 each coordinate Mg(2+). Residues 75-76 (DS), Asp-118, and Lys-147 each bind 3-methyl-2-oxobutanoate. Glu-149 provides a ligand contact to Mg(2+). Glu-217 (proton acceptor) is an active-site residue.

This sequence belongs to the PanB family. Homodecamer; pentamer of dimers. The cofactor is Mg(2+).

It localises to the cytoplasm. The enzyme catalyses 3-methyl-2-oxobutanoate + (6R)-5,10-methylene-5,6,7,8-tetrahydrofolate + H2O = 2-dehydropantoate + (6S)-5,6,7,8-tetrahydrofolate. Its pathway is cofactor biosynthesis; (R)-pantothenate biosynthesis; (R)-pantoate from 3-methyl-2-oxobutanoate: step 1/2. Its function is as follows. Catalyzes the reversible reaction in which hydroxymethyl group from 5,10-methylenetetrahydrofolate is transferred onto alpha-ketoisovalerate to form ketopantoate. This Zymomonas mobilis subsp. mobilis (strain ATCC 31821 / ZM4 / CP4) protein is 3-methyl-2-oxobutanoate hydroxymethyltransferase 1.